Consider the following 127-residue polypeptide: Large ribosomal subunit protein eL18 (127 aa).

The protein belongs to the eukaryotic ribosomal protein eL18 family.

The protein is Large ribosomal subunit protein eL18 of Methanopyrus kandleri (strain AV19 / DSM 6324 / JCM 9639 / NBRC 100938).